The primary structure comprises 183 residues: CKLF-like MARVEL transmembrane domain-containing protein 6 (183 aa).

The residue at position 1 (Met-1) is an N-acetylmethionine. Residues 1–20 are disordered; it reads MENGAVYSPTTEEDPGPARG. Topologically, residues 1–39 are cytoplasmic; it reads MENGAVYSPTTEEDPGPARGPRSGLAAYCFLGRLPLLRR. Ser-8 carries the phosphoserine modification. The 128-residue stretch at 33–160 folds into the MARVEL domain; that stretch reads RLPLLRRVLK…DFVTMLYEKR (128 aa). A helical transmembrane segment spans residues 40–60; sequence VLKGLQLSLSLLAFICEEVVS. Topologically, residues 61–67 are extracellular; it reads QCTLCGG. The helical transmembrane segment at 68–88 threads the bilayer; that stretch reads LYFFEFVSCSAFLLSLLILIV. Over 89 to 106 the chain is Cytoplasmic; the sequence is YCTPFYERVDTTKVKSSD. The chain crosses the membrane as a helical span at residues 107–127; it reads FYITLGTGCVFLLASIIFVST. Over 128 to 134 the chain is Extracellular; that stretch reads HDRTSAE. The helical transmembrane segment at 135 to 155 threads the bilayer; the sequence is IAAIVFGFIASFMFLLDFVTM. The Cytoplasmic portion of the chain corresponds to 156–183; the sequence is LYEKRQESQLRKSENTTRAEALTEPLNA. Position 171 is a phosphothreonine (Thr-171).

This sequence belongs to the chemokine-like factor family. Interacts with PD-L1/CD274 (via transmembrane domain); the interaction is direct. Interacts with CMTM4. Interacts with CD58, ARG1, ENO1 and TMPO.

It is found in the cell membrane. The protein localises to the early endosome membrane. Its subcellular location is the recycling endosome membrane. Functionally, master regulator of recycling and plasma membrane expression of PD-L1/CD274, an immune inhibitory ligand critical for immune tolerance to self and antitumor immunity. Associates with both constitutive and IFNG-induced PD-L1/CD274 at recycling endosomes, where it protects PD-L1/CD274 from being targeted for lysosomal degradation, likely by preventing its ubiquitination. May stabilize PD-L1/CD274 expression on antigen presenting cells and potentiates inhibitory signaling by PDCD1/CD279, its receptor on T-cells, ultimately triggering T-cell anergy. The polypeptide is CKLF-like MARVEL transmembrane domain-containing protein 6 (CMTM6) (Pongo abelii (Sumatran orangutan)).